Here is a 451-residue protein sequence, read N- to C-terminus: MGGEERSGDGEKRGEEVVDAGSLFVLKSKGTWWHCGFHLTTSIVAPALLSLPYAFKFLGWAAGISCLVGGAAVTFYSYTLLSLTLEHHASLGNRYLRFRDMAHHILSPKWGRYYVGPIQMAVCYGVVIANALLGGQCLKAMYLVVQPNGEMKLFEFVIIFGCLLLVLAQFPSFHSLRYINSLSLLLCLLYSASAAAASIYIGKEPNAPEKDYTIVGDPETRVFGIFNAMAIIATTYGNGIIPEIQATISAPVKGKMMKGLCMCYLVVIMTFFTVAITGYWAFGKKANGLIFTNFLNAETNHYFVPTWFIFLVNLFTVLQLSAVAVVYLQPINDILESVISDPTKKEFSIRNVIPRLVVRSLFVVMATIVAAMLPFFGDVNSLLGAFGFIPLDFVLPVVFFNFTFKPSKKSFIFWINTVIAVVFSCLGVIAMVAAVRQIIIDANTYKLFADV.

11 consecutive transmembrane segments (helical) span residues 35 to 55 (CGFH…PYAF), 57 to 77 (FLGW…TFYS), 115 to 135 (VGPI…LLGG), 153 to 173 (LFEF…FPSF), 182 to 202 (LSLL…IYIG), 222 to 242 (VFGI…GIIP), 262 to 282 (MCYL…YWAF), 308 to 328 (FIFL…VVYL), 356 to 376 (LVVR…LPFF), 382 to 402 (LLGA…FFNF), and 411 to 431 (FIFW…VIAM).

It belongs to the amino acid/polyamine transporter 2 family. Amino acid/auxin permease (AAAP) (TC 2.A.18.2) subfamily. In terms of tissue distribution, highly expressed in flowers and at lower levels in roots, leaves and stems.

The protein resides in the cell membrane. Its function is as follows. High affinity gamma-aminobutyric acid (GABA) transporter probably involved in GABA uptake into cells. When expressed in a heterologous system (Xenopus oocytes), imports GABA, butylamine, beta- and L-Alanine, 5-aminovaleric acid, 6-aminocaproic acid and 8-aminocaprylic acid, but does not mediate the transport of proline or glycine betaine. The protein is GABA transporter 1 (GAT1) of Arabidopsis thaliana (Mouse-ear cress).